The sequence spans 156 residues: Small ribosomal subunit protein uS7 (156 aa).

Belongs to the universal ribosomal protein uS7 family. In terms of assembly, part of the 30S ribosomal subunit. Contacts proteins S9 and S11.

Its function is as follows. One of the primary rRNA binding proteins, it binds directly to 16S rRNA where it nucleates assembly of the head domain of the 30S subunit. Is located at the subunit interface close to the decoding center, probably blocks exit of the E-site tRNA. This chain is Small ribosomal subunit protein uS7, found in Methylibium petroleiphilum (strain ATCC BAA-1232 / LMG 22953 / PM1).